Consider the following 205-residue polypeptide: MANTLFDRTIAFAGICQAASLVQKMAKDGHCDQEAFDTAIQSILETNPSNTVAVYGKESNLRIGLECLVRDFDNTPSGSELTRYLISLMALERKLAGHRDGMSKLGERIGTIERQLEHFDIHDEQMLSNIASIYLDVISPMGPRIQVTGTPSVLQQPMTQHKVRALLLSGIRSAVLWRQVGGKRRHLIFGRKKMVEQAKIILAQI.

It belongs to the HflD family.

Its subcellular location is the cytoplasm. It is found in the cell inner membrane. In Aliivibrio fischeri (strain ATCC 700601 / ES114) (Vibrio fischeri), this protein is High frequency lysogenization protein HflD homolog.